A 108-amino-acid polypeptide reads, in one-letter code: Protein SMALL AUXIN UP-REGULATED RNA 51 (108 aa).

This sequence belongs to the ARG7 family. In terms of tissue distribution, expressed in organ primordia. Hardly observed in leaves.

It localises to the cell membrane. Functionally, provide a mechanistic link between auxin and plasma membrane H(+)-ATPases (PM H(+)-ATPases, e.g. AHA1 and AHA2), and triggers PM H(+)-ATPases activity by promoting phosphorylation of their C-terminal autoinhibitory domain as a result of PP2C-D subfamily of type 2C phosphatases inhibition, thus leading to the acidification of the apoplast and the facilitation of solutes and water uptake to drive cell expansion. Triggers plant growth probably by promoting cell elongation. Regulates branch angles and bending. The polypeptide is Protein SMALL AUXIN UP-REGULATED RNA 51 (Arabidopsis thaliana (Mouse-ear cress)).